The following is a 133-amino-acid chain: MVMNVRVLTPTRVICSTTADEVILPGLTGLVGILDGHAALITALDTGLLRIKLNEKWTPIILCGGLAEIDRNRVTVLVNDVEELVAVELNEATTELEKATLAVENAETSKARLDASIELKKAVARLEGMNYLS.

The protein belongs to the ATPase epsilon chain family. F-type ATPases have 2 components, CF(1) - the catalytic core - and CF(0) - the membrane proton channel. CF(1) has five subunits: alpha(3), beta(3), gamma(1), delta(1), epsilon(1). CF(0) has three main subunits: a, b and c.

It is found in the plastid. Its subcellular location is the chloroplast thylakoid membrane. Functionally, produces ATP from ADP in the presence of a proton gradient across the membrane. This chain is ATP synthase epsilon chain, chloroplastic, found in Trieres chinensis (Marine centric diatom).